A 1085-amino-acid polypeptide reads, in one-letter code: Translation factor GUF1 homolog, mitochondrial (1085 aa).

A tr-type G domain is found at 232-409; the sequence is KYIRNFCILA…RIISDIPPPI (178 aa). GTP contacts are provided by residues 241 to 248, 302 to 306, and 356 to 359; these read AHIDSGKS, DTPGH, and NKID.

Belongs to the TRAFAC class translation factor GTPase superfamily. Classic translation factor GTPase family. LepA subfamily.

It localises to the mitochondrion inner membrane. It catalyses the reaction GTP + H2O = GDP + phosphate + H(+). Promotes mitochondrial protein synthesis. May act as a fidelity factor of the translation reaction, by catalyzing a one-codon backward translocation of tRNAs on improperly translocated ribosomes. Binds to mitochondrial ribosomes in a GTP-dependent manner. In Plasmodium falciparum (isolate 3D7), this protein is Translation factor GUF1 homolog, mitochondrial.